The following is a 157-amino-acid chain: Ribosomal RNA large subunit methyltransferase H (157 aa).

Residues L73, G104, and 121 to 126 (LSPLTL) each bind S-adenosyl-L-methionine.

Belongs to the RNA methyltransferase RlmH family. As to quaternary structure, homodimer.

It is found in the cytoplasm. The catalysed reaction is pseudouridine(1915) in 23S rRNA + S-adenosyl-L-methionine = N(3)-methylpseudouridine(1915) in 23S rRNA + S-adenosyl-L-homocysteine + H(+). Its function is as follows. Specifically methylates the pseudouridine at position 1915 (m3Psi1915) in 23S rRNA. This is Ribosomal RNA large subunit methyltransferase H from Acidithiobacillus ferrooxidans (strain ATCC 23270 / DSM 14882 / CIP 104768 / NCIMB 8455) (Ferrobacillus ferrooxidans (strain ATCC 23270)).